The sequence spans 395 residues: Protochlorophyllide reductase B, chloroplastic (395 aa).

The N-terminal 59 residues, 1–59 (MALQAATSFLPSALSARKEGAAKDSAFFGVRLADGLKLDATSLGLRTKRVNTSSVAIRA), are a transit peptide targeting the chloroplast.

The protein belongs to the short-chain dehydrogenases/reductases (SDR) family. POR subfamily.

The protein resides in the plastid. Its subcellular location is the chloroplast. It catalyses the reaction chlorophyllide a + NADP(+) = protochlorophyllide a + NADPH + H(+). It participates in porphyrin-containing compound metabolism; chlorophyll biosynthesis. Functionally, phototransformation of protochlorophyllide (Pchlide) to chlorophyllide (Chlide). The protein is Protochlorophyllide reductase B, chloroplastic (PORB) of Hordeum vulgare (Barley).